Here is a 262-residue protein sequence, read N- to C-terminus: Pyridoxine 5'-phosphate synthase (262 aa).

Residue Asn6 participates in 3-amino-2-oxopropyl phosphate binding. Position 8–9 (8–9) interacts with 1-deoxy-D-xylulose 5-phosphate; that stretch reads DH. Residue Arg17 participates in 3-amino-2-oxopropyl phosphate binding. His43 serves as the catalytic Proton acceptor. Residues Arg45 and His50 each coordinate 1-deoxy-D-xylulose 5-phosphate. The Proton acceptor role is filled by Glu70. Position 102 (Thr102) interacts with 1-deoxy-D-xylulose 5-phosphate. The active-site Proton donor is His215. Residues Gly216 and 237-238 each bind 3-amino-2-oxopropyl phosphate; that span reads GH.

Belongs to the PNP synthase family. In terms of assembly, homooctamer; tetramer of dimers.

It is found in the cytoplasm. It catalyses the reaction 3-amino-2-oxopropyl phosphate + 1-deoxy-D-xylulose 5-phosphate = pyridoxine 5'-phosphate + phosphate + 2 H2O + H(+). The protein operates within cofactor biosynthesis; pyridoxine 5'-phosphate biosynthesis; pyridoxine 5'-phosphate from D-erythrose 4-phosphate: step 5/5. Functionally, catalyzes the complicated ring closure reaction between the two acyclic compounds 1-deoxy-D-xylulose-5-phosphate (DXP) and 3-amino-2-oxopropyl phosphate (1-amino-acetone-3-phosphate or AAP) to form pyridoxine 5'-phosphate (PNP) and inorganic phosphate. This chain is Pyridoxine 5'-phosphate synthase, found in Helicobacter pylori (strain Shi470).